We begin with the raw amino-acid sequence, 590 residues long: Threonine dehydratase biosynthetic, chloroplastic (590 aa).

The transit peptide at 1 to 44 directs the protein to the chloroplast; sequence MLSTSTTNSSILPFRSRASSSTFIARPPANFNSIFTTSVRVFPI. The residue at position 139 (Lys139) is an N6-(pyridoxal phosphate)lysine. ACT-like domains lie at 416 to 488 and 509 to 580; these read ALLG…NISH and EVFV…IDQY.

The protein belongs to the serine/threonine dehydratase family. It depends on pyridoxal 5'-phosphate as a cofactor. Found at higher levels in flowers than in other organs.

It localises to the plastid. The protein localises to the chloroplast. The enzyme catalyses L-threonine = 2-oxobutanoate + NH4(+). It functions in the pathway amino-acid biosynthesis; L-isoleucine biosynthesis; 2-oxobutanoate from L-threonine: step 1/1. Allosterically inhibited by isoleucine. The sequence is that of Threonine dehydratase biosynthetic, chloroplastic from Cicer arietinum (Chickpea).